A 433-amino-acid polypeptide reads, in one-letter code: MTIQTETSVSAPDLTYSKTRGLVANLSAFMKQRKMGLNDFIQKLSANSYACKHPEVQSILNLTPPQDVELMNSNPSPPPSPSQQINLGPSSNPTAKPSDFDFLKVIGKGSFGKVLLARHRSDEKFYAVKVLQKKAILKKKEEKHIMSERNVLLKNVKHPFLVGLHYSFQTTDKLYFVLDYINGGELFYHLQRERCFLEPRARFYAAEIASALGYLHSLNIVYRDLKPENILLDSQGHIILTDFGLCKENIEPNGTTSTFCGTPEYLAPEVLHKQPYDRTVDWWCLGAVLYEMLYGLPPFYSRNTAEMYDNILNKPLQLKPNISNAARHLLEGLLQKDRTKRLGFTDDFTEIKNHMFFSPINWDDLNAKKLTPPFNPNVTGPNDLRHFDPEFTDEPVPNSIGCSPDSALVTSSITEATEAFLGFSYAPAMDSYL.

Residues 66–92 (QDVELMNSNPSPPPSPSQQINLGPSSN) form a disordered region. Polar residues predominate over residues 83–92 (QQINLGPSSN). In terms of domain architecture, Protein kinase spans 100 to 357 (FDFLKVIGKG…FTEIKNHMFF (258 aa)). ATP-binding positions include 106–114 (IGKGSFGKV) and Lys129. The active-site Proton acceptor is Asp224. The region spanning 358-433 (SPINWDDLNA…SYAPAMDSYL (76 aa)) is the AGC-kinase C-terminal domain.

It belongs to the protein kinase superfamily. AGC Ser/Thr protein kinase family.

Its subcellular location is the cytoplasm. It is found in the nucleus. The protein resides in the endoplasmic reticulum. It catalyses the reaction L-seryl-[protein] + ATP = O-phospho-L-seryl-[protein] + ADP + H(+). It carries out the reaction L-threonyl-[protein] + ATP = O-phospho-L-threonyl-[protein] + ADP + H(+). Its function is as follows. Protein kinase that may play an important role in cellular stress response. May be involved in the regulation of processes such as cell survival, neuronal excitability and renal sodium excretion. This chain is Serine/threonine-protein kinase Sgk1 (sgk1), found in Danio rerio (Zebrafish).